Consider the following 432-residue polypeptide: Adenosine 3'-phospho 5'-phosphosulfate transporter 1 (432 aa).

Helical transmembrane passes span 5–25 (WWAVVVLAAFPSLGAGGETPE), 40–60 (VVNAAGYASFMVPGYLLVQYF), 109–129 (ALKLLFCATGLQVSYLTWGVL), 154–174 (FLVLMNRVLALIVAGLSCVLC), 238–258 (WEYLTATLISIGVSMFLLSSG), 265–285 (PATTLSGLILLAGYIAFDSFT), 299–319 (SVQMMFGVNFFSCLFTVGSLL), 353–373 (LFIFYTIGQFGAAVFTIIMTL), and 387–407 (GHTVTVVGGLGVAVVFAALLL). The residue at position 427 (Ser-427) is a Phosphoserine.

Belongs to the nucleotide-sugar transporter family. SLC35B subfamily. In terms of tissue distribution, highly expressed in the placenta, pancreas, mammary gland and skeletal muscle. Weakly or not expressed in colon, heart and prostate. Expressed in the brain, predominantly in frontal lobe gray matter, subcortical frontal white matter and cerebellum.

The protein resides in the golgi apparatus membrane. It catalyses the reaction 3'-phosphoadenylyl sulfate(in) + adenosine 3',5'-bisphosphate(out) = 3'-phosphoadenylyl sulfate(out) + adenosine 3',5'-bisphosphate(in). Functionally, probably functions as a 3'-phosphoadenylyl sulfate:adenosine 3',5'-bisphosphate antiporter at the Golgi membranes. Mediates the transport from the cytosol into the lumen of the Golgi of 3'-phosphoadenylyl sulfate/adenosine 3'-phospho 5'-phosphosulfate (PAPS), a universal sulfuryl donor for sulfation events that take place in that compartment. The chain is Adenosine 3'-phospho 5'-phosphosulfate transporter 1 from Homo sapiens (Human).